The sequence spans 394 residues: MSKEKFERLKPHVNVGTIGHVDHGKTTLTAAICTVLAKVYGGDAKDFASIDNAPEERERGITISTSHVEYDTPARHYAHVDCPGHADYVKNMITGAAQMDGGILVVAATDGPMPQTREHILLGRQVGIPYIIVFMNKCDMVDDEELLELVEMEVRELLSEYDFPGDDCPVIMGSALGALNGEAQWEEKIIELAEALDNYIPEPERAIDLPFILPIEDVFSIQGRGTVVTGRVEQGIVRVGEEVAIIGIKETTTTTCTGVEMFRKLLDEGRAGENVGVLLRGTKRDDVERGQVLAKPGSITPHTTFTSEIYVLSKDEGGRHTPFFKGYRPQFYFRTTDVTGTIELPEGVEMVMPGDNIAMTVTLIAPIAMDEGLRFAIREGGRTVGAGVVATIIA.

Residues 10 to 204 form the tr-type G domain; sequence KPHVNVGTIG…ALDNYIPEPE (195 aa). Residues 19–26 form a G1 region; it reads GHVDHGKT. 19–26 contributes to the GTP binding site; that stretch reads GHVDHGKT. Threonine 26 contributes to the Mg(2+) binding site. The tract at residues 60 to 64 is G2; that stretch reads GITIS. Positions 81–84 are G3; the sequence is DCPG. GTP is bound by residues 81-85 and 136-139; these read DCPGH and NKCD. Residues 136–139 are G4; it reads NKCD. Residues 174 to 176 are G5; that stretch reads SAL.

The protein belongs to the TRAFAC class translation factor GTPase superfamily. Classic translation factor GTPase family. EF-Tu/EF-1A subfamily. As to quaternary structure, monomer.

The protein resides in the cytoplasm. It catalyses the reaction GTP + H2O = GDP + phosphate + H(+). GTP hydrolase that promotes the GTP-dependent binding of aminoacyl-tRNA to the A-site of ribosomes during protein biosynthesis. This is Elongation factor Tu 1 from Photobacterium profundum (strain SS9).